We begin with the raw amino-acid sequence, 84 residues long: Small ribosomal subunit protein bS16 (84 aa).

Belongs to the bacterial ribosomal protein bS16 family.

This Paraburkholderia phymatum (strain DSM 17167 / CIP 108236 / LMG 21445 / STM815) (Burkholderia phymatum) protein is Small ribosomal subunit protein bS16.